Consider the following 430-residue polypeptide: tRNA(Ile)-lysidine synthase (430 aa).

24–29 provides a ligand contact to ATP; the sequence is SGGLDS.

The protein belongs to the tRNA(Ile)-lysidine synthase family.

It is found in the cytoplasm. It carries out the reaction cytidine(34) in tRNA(Ile2) + L-lysine + ATP = lysidine(34) in tRNA(Ile2) + AMP + diphosphate + H(+). Ligates lysine onto the cytidine present at position 34 of the AUA codon-specific tRNA(Ile) that contains the anticodon CAU, in an ATP-dependent manner. Cytidine is converted to lysidine, thus changing the amino acid specificity of the tRNA from methionine to isoleucine. The polypeptide is tRNA(Ile)-lysidine synthase (Haemophilus influenzae (strain ATCC 51907 / DSM 11121 / KW20 / Rd)).